Here is a 260-residue protein sequence, read N- to C-terminus: Acetylglutamate kinase (260 aa).

Residues 46-47 (GG), Arg-68, and Asn-160 each bind substrate.

It belongs to the acetylglutamate kinase family. ArgB subfamily.

It localises to the cytoplasm. The catalysed reaction is N-acetyl-L-glutamate + ATP = N-acetyl-L-glutamyl 5-phosphate + ADP. It participates in amino-acid biosynthesis; L-arginine biosynthesis; N(2)-acetyl-L-ornithine from L-glutamate: step 2/4. Functionally, catalyzes the ATP-dependent phosphorylation of N-acetyl-L-glutamate. The protein is Acetylglutamate kinase of Shewanella oneidensis (strain ATCC 700550 / JCM 31522 / CIP 106686 / LMG 19005 / NCIMB 14063 / MR-1).